The primary structure comprises 78 residues: Acyl carrier protein (78 aa).

The region spanning 1-76 (MAIHPKVKDI…DVASYLEKKG (76 aa)) is the Carrier domain. Serine 36 carries the post-translational modification O-(pantetheine 4'-phosphoryl)serine.

This sequence belongs to the acyl carrier protein (ACP) family. 4'-phosphopantetheine is transferred from CoA to a specific serine of apo-ACP by AcpS. This modification is essential for activity because fatty acids are bound in thioester linkage to the sulfhydryl of the prosthetic group.

The protein localises to the cytoplasm. The protein operates within lipid metabolism; fatty acid biosynthesis. In terms of biological role, carrier of the growing fatty acid chain in fatty acid biosynthesis. In Bdellovibrio bacteriovorus (strain ATCC 15356 / DSM 50701 / NCIMB 9529 / HD100), this protein is Acyl carrier protein.